We begin with the raw amino-acid sequence, 343 residues long: Ribosomal RNA small subunit methyltransferase C (343 aa).

The protein belongs to the methyltransferase superfamily. RsmC family. As to quaternary structure, monomer.

It localises to the cytoplasm. The enzyme catalyses guanosine(1207) in 16S rRNA + S-adenosyl-L-methionine = N(2)-methylguanosine(1207) in 16S rRNA + S-adenosyl-L-homocysteine + H(+). Functionally, specifically methylates the guanine in position 1207 of 16S rRNA in the 30S particle. This is Ribosomal RNA small subunit methyltransferase C from Escherichia coli O7:K1 (strain IAI39 / ExPEC).